The chain runs to 1108 residues: Probable E3 ubiquitin ligase SUD1 (1108 aa).

The disordered stretch occupies residues 1-60 (MEISPADSLSISGAAASEVVSEPSVSSSSSSSSPNQASPNPFSNMDPAVSTATGSRYVDD). Residues 10 to 44 (SISGAAASEVVSEPSVSSSSSSSSPNQASPNPFSN) are compositionally biased toward low complexity. Residues 60-121 (DDEDEEDVCR…EVCKHPFSFS (62 aa)) form an RING-CH-type zinc finger. Positions 68, 71, 85, 87, 95, 98, 111, and 114 each coordinate Zn(2+). 2 helical membrane-spanning segments follow: residues 157–177 (FVLS…WRLA) and 197–217 (VILT…FIFL). Residues 237–246 (ERDDDVDRNG) show a composition bias toward basic and acidic residues. The disordered stretch occupies residues 237–273 (ERDDDVDRNGARAARRPAGQANRNLAGEGNGEDAGDQ). The stretch at 286–308 (ENVLARLDIQAARLEAQVEQMFD) forms a coiled coil. Helical transmembrane passes span 339–359 (FTVL…PFTL), 362–382 (IILY…VAAS), 462–482 (AVGY…IALI), 489–509 (PLTV…PSLL), 525–545 (VAFL…WWLD), 572–592 (LVHW…VSLL), 630–650 (VLLS…LPVK), and 669–689 (PFTE…FIIE). Residues 762–784 (PNRSRLRAGNVNTGEEYEDDDEQ) form a disordered region. The next 6 helical transmembrane spans lie at 796–816 (IILL…ALIV), 844–864 (YAFV…RYAI), 894–914 (AIWV…LVIV), 923–943 (SPVF…KIWT), 982–1002 (EIVF…YVLA), and 1017–1036 (SAVY…FCFC).

In terms of tissue distribution, expressed in cotyledons, leaves, roots, stems, inflorescences and siliques. Expression higher at the top than at the base of the stem.

The protein resides in the membrane. The catalysed reaction is S-ubiquitinyl-[E2 ubiquitin-conjugating enzyme]-L-cysteine + [acceptor protein]-L-lysine = [E2 ubiquitin-conjugating enzyme]-L-cysteine + N(6)-ubiquitinyl-[acceptor protein]-L-lysine.. The protein operates within protein modification; protein ubiquitination. In terms of biological role, probable E3 ubiquitin ligase acting as a positive post-transcriptional regulator of 3-hydroxy-3-methylglutaryl-coenzyme A reductase activity. Might be involved in the quality control that degrades misfolded proteins. The chain is Probable E3 ubiquitin ligase SUD1 (SUD1) from Arabidopsis thaliana (Mouse-ear cress).